The chain runs to 161 residues: MSVTLHTDVGDIKIEVFCERTPKTCENFLALCASNYYNGCVFHRNIKGFMVQTGDPTGTGRGGSSIWAKKFEDEYSEYLKHNVRGVVSMANNGPNTNGSQFFITYGKQPHLDMKYTVFGKVIDGLETLDELEKLPVNEKTYRPLNDVHIKDITIHANPFAQ.

The residue at position 2 (serine 2) is an N-acetylserine. Residues 2 to 154 (SVTLHTDVGD…NDVHIKDITI (153 aa)) form the PPIase cyclophilin-type domain. The residue at position 61 (arginine 61) is an Omega-N-methylarginine.

It belongs to the cyclophilin-type PPIase family. PPIL3 subfamily. Identified in the spliceosome C complex.

It carries out the reaction [protein]-peptidylproline (omega=180) = [protein]-peptidylproline (omega=0). In terms of biological role, PPIases accelerate the folding of proteins. It catalyzes the cis-trans isomerization of proline imidic peptide bonds in oligopeptides. May be involved in pre-mRNA splicing. The sequence is that of Peptidyl-prolyl cis-trans isomerase-like 3 (Ppil3) from Mus musculus (Mouse).